We begin with the raw amino-acid sequence, 177 residues long: Large ribosomal subunit protein uL6 (177 aa).

It belongs to the universal ribosomal protein uL6 family. In terms of assembly, part of the 50S ribosomal subunit.

Its function is as follows. This protein binds to the 23S rRNA, and is important in its secondary structure. It is located near the subunit interface in the base of the L7/L12 stalk, and near the tRNA binding site of the peptidyltransferase center. In Salmonella dublin (strain CT_02021853), this protein is Large ribosomal subunit protein uL6.